Here is a 357-residue protein sequence, read N- to C-terminus: 4-hydroxy-3-methylbut-2-en-1-yl diphosphate synthase (flavodoxin) (357 aa).

Residues cysteine 264, cysteine 267, cysteine 299, and glutamate 306 each coordinate [4Fe-4S] cluster.

Belongs to the IspG family. The cofactor is [4Fe-4S] cluster.

It carries out the reaction (2E)-4-hydroxy-3-methylbut-2-enyl diphosphate + oxidized [flavodoxin] + H2O + 2 H(+) = 2-C-methyl-D-erythritol 2,4-cyclic diphosphate + reduced [flavodoxin]. Its pathway is isoprenoid biosynthesis; isopentenyl diphosphate biosynthesis via DXP pathway; isopentenyl diphosphate from 1-deoxy-D-xylulose 5-phosphate: step 5/6. Its function is as follows. Converts 2C-methyl-D-erythritol 2,4-cyclodiphosphate (ME-2,4cPP) into 1-hydroxy-2-methyl-2-(E)-butenyl 4-diphosphate. This is 4-hydroxy-3-methylbut-2-en-1-yl diphosphate synthase (flavodoxin) from Campylobacter jejuni subsp. jejuni serotype O:23/36 (strain 81-176).